A 361-amino-acid chain; its full sequence is Phosphoserine aminotransferase (361 aa).

Arg-42 serves as a coordination point for L-glutamate. Residues 76 to 77, Trp-102, Thr-154, Asp-173, and Gln-196 contribute to the pyridoxal 5'-phosphate site; that span reads GR. The residue at position 197 (Lys-197) is an N6-(pyridoxal phosphate)lysine. Residue 238–239 participates in pyridoxal 5'-phosphate binding; it reads NT.

Belongs to the class-V pyridoxal-phosphate-dependent aminotransferase family. SerC subfamily. Homodimer. Requires pyridoxal 5'-phosphate as cofactor.

The protein resides in the cytoplasm. It carries out the reaction O-phospho-L-serine + 2-oxoglutarate = 3-phosphooxypyruvate + L-glutamate. It catalyses the reaction 4-(phosphooxy)-L-threonine + 2-oxoglutarate = (R)-3-hydroxy-2-oxo-4-phosphooxybutanoate + L-glutamate. Its pathway is amino-acid biosynthesis; L-serine biosynthesis; L-serine from 3-phospho-D-glycerate: step 2/3. It participates in cofactor biosynthesis; pyridoxine 5'-phosphate biosynthesis; pyridoxine 5'-phosphate from D-erythrose 4-phosphate: step 3/5. In terms of biological role, catalyzes the reversible conversion of 3-phosphohydroxypyruvate to phosphoserine and of 3-hydroxy-2-oxo-4-phosphonooxybutanoate to phosphohydroxythreonine. This chain is Phosphoserine aminotransferase, found in Idiomarina loihiensis (strain ATCC BAA-735 / DSM 15497 / L2-TR).